The sequence spans 244 residues: Ribosomal RNA small subunit methyltransferase NEP1 (244 aa).

A disordered region spans residues 1–33; that stretch reads MSAASGGFQPRERRFSVQEQDWETTPPKKLRLG. A phosphoserine mark is found at Ser5 and Ser16. Residues Thr176, Gly201, Gly206, and 219–224 each bind S-adenosyl-L-methionine; that span reads ISNYPL.

Belongs to the class IV-like SAM-binding methyltransferase superfamily. RNA methyltransferase NEP1 family. In terms of assembly, homodimer. Part of the small subunit (SSU) processome, composed of more than 70 proteins and the RNA chaperone small nucleolar RNA (snoRNA) U3.

The protein localises to the nucleus. It localises to the nucleolus. The enzyme catalyses pseudouridine(1248) in human 18S rRNA + S-adenosyl-L-methionine = N(1)-methylpseudouridine(1248) in human 18S rRNA + S-adenosyl-L-homocysteine + H(+). S-adenosyl-L-methionine-dependent pseudouridine N(1)-methyltransferase that methylates pseudouridine at position in 18S rRNA. Involved the biosynthesis of the hypermodified N1-methyl-N3-(3-amino-3-carboxypropyl) pseudouridine (m1acp3-Psi) conserved in eukaryotic 18S rRNA. Is not able to methylate uridine at this position. Also has an essential role in 40S ribosomal subunit biogenesis independent on its methyltransferase activity, facilitating the incorporation of ribosomal protein S19 during the formation of pre-ribosomes. Part of the small subunit (SSU) processome, first precursor of the small eukaryotic ribosomal subunit. During the assembly of the SSU processome in the nucleolus, many ribosome biogenesis factors, an RNA chaperone and ribosomal proteins associate with the nascent pre-rRNA and work in concert to generate RNA folding, modifications, rearrangements and cleavage as well as targeted degradation of pre-ribosomal RNA by the RNA exosome. In Mus musculus (Mouse), this protein is Ribosomal RNA small subunit methyltransferase NEP1.